Here is a 1069-residue protein sequence, read N- to C-terminus: Acyl-CoA dehydrogenase family member 10 (1069 aa).

Residue Lys-413 is modified to N6-succinyllysine. Residue Lys-427 is modified to N6-acetyllysine; alternate. Position 427 is an N6-succinyllysine; alternate (Lys-427). Residues 792–802, Ser-828, Arg-943, Gln-1013, and Glu-1044 contribute to the FAD site; that span reads FAMTEPQVASS. Lys-1052 carries the N6-acetyllysine; alternate modification. Position 1052 is an N6-succinyllysine; alternate (Lys-1052).

It belongs to the acyl-CoA dehydrogenase family. FAD is required as a cofactor.

It carries out the reaction a 2,3-saturated acyl-CoA + A = a 2,3-dehydroacyl-CoA + AH2. Functionally, acyl-CoA dehydrogenase only active with R- and S-2-methyl-C15-CoA. This chain is Acyl-CoA dehydrogenase family member 10 (Acad10), found in Mus musculus (Mouse).